Reading from the N-terminus, the 448-residue chain is ATP-dependent protease ATPase subunit HslU (448 aa).

ATP is bound by residues isoleucine 18, 60–65 (GVGKTE), aspartate 261, glutamate 326, and arginine 398.

It belongs to the ClpX chaperone family. HslU subfamily. A double ring-shaped homohexamer of HslV is capped on each side by a ring-shaped HslU homohexamer. The assembly of the HslU/HslV complex is dependent on binding of ATP.

The protein localises to the cytoplasm. Functionally, ATPase subunit of a proteasome-like degradation complex; this subunit has chaperone activity. The binding of ATP and its subsequent hydrolysis by HslU are essential for unfolding of protein substrates subsequently hydrolyzed by HslV. HslU recognizes the N-terminal part of its protein substrates and unfolds these before they are guided to HslV for hydrolysis. This chain is ATP-dependent protease ATPase subunit HslU, found in Paraburkholderia xenovorans (strain LB400).